Here is a 456-residue protein sequence, read N- to C-terminus: Glutamyl-tRNA reductase (456 aa).

Residues T49–R52, S109, E114–Q116, and Q120 contribute to the substrate site. Residue C50 is the Nucleophile of the active site. G189–G194 is a binding site for NADP(+).

It belongs to the glutamyl-tRNA reductase family. Homodimer.

The enzyme catalyses (S)-4-amino-5-oxopentanoate + tRNA(Glu) + NADP(+) = L-glutamyl-tRNA(Glu) + NADPH + H(+). Its pathway is porphyrin-containing compound metabolism; protoporphyrin-IX biosynthesis; 5-aminolevulinate from L-glutamyl-tRNA(Glu): step 1/2. Functionally, catalyzes the NADPH-dependent reduction of glutamyl-tRNA(Glu) to glutamate 1-semialdehyde (GSA). The protein is Glutamyl-tRNA reductase of Mycolicibacterium vanbaalenii (strain DSM 7251 / JCM 13017 / BCRC 16820 / KCTC 9966 / NRRL B-24157 / PYR-1) (Mycobacterium vanbaalenii).